We begin with the raw amino-acid sequence, 148 residues long: 3-dehydroquinate dehydratase (148 aa).

The Proton acceptor role is filled by Tyr22. 3 residues coordinate substrate: Asn73, His79, and Asp86. The active-site Proton donor is His99. Substrate-binding positions include Leu100–Ser101 and Arg110.

Belongs to the type-II 3-dehydroquinase family. In terms of assembly, homododecamer.

The catalysed reaction is 3-dehydroquinate = 3-dehydroshikimate + H2O. It participates in metabolic intermediate biosynthesis; chorismate biosynthesis; chorismate from D-erythrose 4-phosphate and phosphoenolpyruvate: step 3/7. Functionally, catalyzes a trans-dehydration via an enolate intermediate. This is 3-dehydroquinate dehydratase from Jannaschia sp. (strain CCS1).